Here is a 305-residue protein sequence, read N- to C-terminus: Phospho-N-acetylmuramoyl-pentapeptide-transferase (305 aa).

Transmembrane regions (helical) follow at residues 1 to 21 (MLMVAALLSWFLVGLFIRASK), 46 to 66 (AGGVAFVLAMALVFFPLYLSG), 73 to 93 (ELLIMLTALAMGVVGGVDDWL), 113 to 133 (FPLQFLVALVFAWLAAPLASH), 139 to 159 (LGPVMDVVLIALVMVGSVNAF), 174 to 194 (IIVLLPLLALSPVSALLVAVL), 207 to 227 (VFMGDMGSHAIGAVAAGAYIL), 233 to 253 (LLPIAAIIPVVAVLSVMIQVI), and 282 to 302 (VTIRFWVITAVATAAVWWLLG).

It belongs to the glycosyltransferase 4 family. MraY subfamily. Requires Mg(2+) as cofactor.

The protein resides in the cell membrane. It catalyses the reaction UDP-N-acetyl-alpha-D-muramoyl-L-alanyl-gamma-D-glutamyl-meso-2,6-diaminopimeloyl-D-alanyl-D-alanine + di-trans,octa-cis-undecaprenyl phosphate = di-trans,octa-cis-undecaprenyl diphospho-N-acetyl-alpha-D-muramoyl-L-alanyl-D-glutamyl-meso-2,6-diaminopimeloyl-D-alanyl-D-alanine + UMP. It functions in the pathway cell wall biogenesis; peptidoglycan biosynthesis. In terms of biological role, catalyzes the initial step of the lipid cycle reactions in the biosynthesis of the cell wall peptidoglycan: transfers peptidoglycan precursor phospho-MurNAc-pentapeptide from UDP-MurNAc-pentapeptide onto the lipid carrier undecaprenyl phosphate, yielding undecaprenyl-pyrophosphoryl-MurNAc-pentapeptide, known as lipid I. The protein is Phospho-N-acetylmuramoyl-pentapeptide-transferase of Deinococcus deserti (strain DSM 17065 / CIP 109153 / LMG 22923 / VCD115).